The primary structure comprises 99 residues: Aspartyl/glutamyl-tRNA(Asn/Gln) amidotransferase subunit C (99 aa).

This sequence belongs to the GatC family. In terms of assembly, heterotrimer of A, B and C subunits.

The enzyme catalyses L-glutamyl-tRNA(Gln) + L-glutamine + ATP + H2O = L-glutaminyl-tRNA(Gln) + L-glutamate + ADP + phosphate + H(+). It carries out the reaction L-aspartyl-tRNA(Asn) + L-glutamine + ATP + H2O = L-asparaginyl-tRNA(Asn) + L-glutamate + ADP + phosphate + 2 H(+). Allows the formation of correctly charged Asn-tRNA(Asn) or Gln-tRNA(Gln) through the transamidation of misacylated Asp-tRNA(Asn) or Glu-tRNA(Gln) in organisms which lack either or both of asparaginyl-tRNA or glutaminyl-tRNA synthetases. The reaction takes place in the presence of glutamine and ATP through an activated phospho-Asp-tRNA(Asn) or phospho-Glu-tRNA(Gln). The sequence is that of Aspartyl/glutamyl-tRNA(Asn/Gln) amidotransferase subunit C from Macrococcus caseolyticus (strain JCSC5402) (Macrococcoides caseolyticum).